The sequence spans 72 residues: Sperm protein associated with the nucleus on the X chromosome N1 (72 aa).

A disordered region spans residues 1–40 (MEKPTSSTNGEKRKSPCDSNNKNDEMQETPNRDLVLEPSL). Residues 10–35 (GEKRKSPCDSNNKNDEMQETPNRDLV) show a composition bias toward basic and acidic residues.

It belongs to the SPAN-X family.

The protein is Sperm protein associated with the nucleus on the X chromosome N1 (SPANXN1) of Gorilla gorilla gorilla (Western lowland gorilla).